A 254-amino-acid chain; its full sequence is Axonemal dynein light intermediate polypeptide 1 (254 aa).

Residues methionine 1–leucine 55 form a disordered region. Residues alanine 175–glutamine 245 are a coiled coil.

The protein belongs to the inner dynein arm light chain family.

Its subcellular location is the cell projection. The protein localises to the cilium. It localises to the flagellum. It is found in the dynein axonemal particle. The protein resides in the cytoplasm. Its function is as follows. Involved in sperm flagellum assembly. The polypeptide is Axonemal dynein light intermediate polypeptide 1 (Xenopus laevis (African clawed frog)).